Reading from the N-terminus, the 526-residue chain is 1,4-beta-D-glucan cellobiohydrolase B (526 aa).

The signal sequence occupies residues 1–23 (MASSFQLYKALLFFSSLLSAVQA). The segment at 24-458 (QKVGTQQAEV…SNIKFGPIGS (435 aa)) is catalytic. E235 serves as the catalytic Nucleophile. The active-site Proton donor is E240. N-linked (GlcNAc...) asparagine glycans are attached at residues N293 and N400. A ser/Thr-rich linker region spans residues 459–490 (TFGNGGGSGPTTTVTTSTATSTTSSATSTATG). Residues 464-488 (GGSGPTTTVTTSTATSTTSSATSTA) are disordered. Residues 468–488 (PTTTVTTSTATSTTSSATSTA) show a composition bias toward low complexity. Residues 490 to 526 (GQAQHWEQCGGNGWTGPTVCASPWACTVVNSWYSQCL) form the CBM1 domain. 2 disulfides stabilise this stretch: C498/C515 and C509/C525.

This sequence belongs to the glycosyl hydrolase 7 (cellulase C) family.

It is found in the secreted. The enzyme catalyses Hydrolysis of (1-&gt;4)-beta-D-glucosidic linkages in cellulose and cellotetraose, releasing cellobiose from the non-reducing ends of the chains.. Its function is as follows. The biological conversion of cellulose to glucose generally requires three types of hydrolytic enzymes: (1) Endoglucanases which cut internal beta-1,4-glucosidic bonds; (2) Exocellobiohydrolases that cut the disaccharide cellobiose from the non-reducing end of the cellulose polymer chain; (3) Beta-1,4-glucosidases which hydrolyze the cellobiose and other short cello-oligosaccharides to glucose. The polypeptide is 1,4-beta-D-glucan cellobiohydrolase B (cbhB) (Emericella nidulans (strain FGSC A4 / ATCC 38163 / CBS 112.46 / NRRL 194 / M139) (Aspergillus nidulans)).